The primary structure comprises 97 residues: Exodeoxyribonuclease 7 small subunit (97 aa).

Residues Met-1–Asn-22 are disordered.

This sequence belongs to the XseB family. In terms of assembly, heterooligomer composed of large and small subunits.

Its subcellular location is the cytoplasm. The catalysed reaction is Exonucleolytic cleavage in either 5'- to 3'- or 3'- to 5'-direction to yield nucleoside 5'-phosphates.. In terms of biological role, bidirectionally degrades single-stranded DNA into large acid-insoluble oligonucleotides, which are then degraded further into small acid-soluble oligonucleotides. This chain is Exodeoxyribonuclease 7 small subunit, found in Burkholderia cenocepacia (strain HI2424).